A 207-amino-acid chain; its full sequence is Holliday junction branch migration complex subunit RuvA (207 aa).

A domain I region spans residues 1–64; that stretch reads MIGLISGQVQ…EDAQLLYGFI (64 aa). Residues 65–143 form a domain II region; the sequence is DRKERDVFRQ…NIEVDNSNLE (79 aa). The interval 144-152 is flexible linker; that stretch reads FAIQPAPIS. A domain III region spans residues 153–207; it reads AEDSIIAEVEGALMSLGYKEKEAQQAIKAAKSNGETFADTQSLLKATLQQFQSFK.

It belongs to the RuvA family. Homotetramer. Forms an RuvA(8)-RuvB(12)-Holliday junction (HJ) complex. HJ DNA is sandwiched between 2 RuvA tetramers; dsDNA enters through RuvA and exits via RuvB. An RuvB hexamer assembles on each DNA strand where it exits the tetramer. Each RuvB hexamer is contacted by two RuvA subunits (via domain III) on 2 adjacent RuvB subunits; this complex drives branch migration. In the full resolvosome a probable DNA-RuvA(4)-RuvB(12)-RuvC(2) complex forms which resolves the HJ.

The protein localises to the cytoplasm. The RuvA-RuvB-RuvC complex processes Holliday junction (HJ) DNA during genetic recombination and DNA repair, while the RuvA-RuvB complex plays an important role in the rescue of blocked DNA replication forks via replication fork reversal (RFR). RuvA specifically binds to HJ cruciform DNA, conferring on it an open structure. The RuvB hexamer acts as an ATP-dependent pump, pulling dsDNA into and through the RuvAB complex. HJ branch migration allows RuvC to scan DNA until it finds its consensus sequence, where it cleaves and resolves the cruciform DNA. This is Holliday junction branch migration complex subunit RuvA from Psychrobacter arcticus (strain DSM 17307 / VKM B-2377 / 273-4).